The sequence spans 205 residues: Melanocortin-2 receptor accessory protein 2 (205 aa).

N-linked (GlcNAc...) asparagine glycosylation occurs at N9. A helical transmembrane segment spans residues 45-65 (IVIGFWVGLAVFVIFMFFVLT). Position 89 is a phosphoserine (S89).

The protein belongs to the MRAP family. As to quaternary structure, homodimer and heterodimer. Forms antiparallel homodimers and heterodimers with MRAP. Interacts with MC1R, MC2R, MC3R, MC4R and MC5R. In terms of tissue distribution, expressed in the adrenal gland and brain. Not expressed in other tissues.

It localises to the cell membrane. Its subcellular location is the endoplasmic reticulum membrane. Its function is as follows. Modulator of melanocortin receptor 4 (MC4R), a receptor involved in energy homeostasis. Plays a central role in the control of energy homeostasis and body weight regulation by increasing ligand-sensitivity of MC4R and MC4R-mediated generation of cAMP. May also act as a negative regulator of MC2R: competes with MRAP for binding to MC2R and impairs the binding of corticotropin (ACTH) to MC2R. May also regulate activity of other melanocortin receptors (MC1R, MC3R and MC5R); however, additional evidence is required in vivo. This chain is Melanocortin-2 receptor accessory protein 2 (MRAP2), found in Homo sapiens (Human).